We begin with the raw amino-acid sequence, 466 residues long: Ribulose bisphosphate carboxylase large chain (466 aa).

N6,N6,N6-trimethyllysine is present on Lys-5. Residues Asn-114 and Thr-164 each contribute to the substrate site. The Proton acceptor role is filled by Lys-166. Lys-168 lines the substrate pocket. The Mg(2+) site is built by Lys-192, Asp-194, and Glu-195. The residue at position 192 (Lys-192) is an N6-carboxylysine. The active-site Proton acceptor is His-285. Substrate contacts are provided by Arg-286, His-318, and Ser-370.

The protein belongs to the RuBisCO large chain family. Type I subfamily. In terms of assembly, heterohexadecamer of 8 large chains and 8 small chains; disulfide-linked. The disulfide link is formed within the large subunit homodimers. Requires Mg(2+) as cofactor. In terms of processing, the disulfide bond which can form in the large chain dimeric partners within the hexadecamer appears to be associated with oxidative stress and protein turnover.

It is found in the plastid. The protein resides in the chloroplast. The enzyme catalyses 2 (2R)-3-phosphoglycerate + 2 H(+) = D-ribulose 1,5-bisphosphate + CO2 + H2O. It carries out the reaction D-ribulose 1,5-bisphosphate + O2 = 2-phosphoglycolate + (2R)-3-phosphoglycerate + 2 H(+). Its function is as follows. RuBisCO catalyzes two reactions: the carboxylation of D-ribulose 1,5-bisphosphate, the primary event in carbon dioxide fixation, as well as the oxidative fragmentation of the pentose substrate in the photorespiration process. Both reactions occur simultaneously and in competition at the same active site. The chain is Ribulose bisphosphate carboxylase large chain from Drosera capensis (Cape sundew).